A 771-amino-acid polypeptide reads, in one-letter code: MFDVKKVSIEWGGETLTLETGKVARQADGAVIATLGETVVLCAVTAAKSVKDGQDFFPLTVHYQEKYSAAGRIPGGFFKRERGATEKETLVSRLIDRPIRPLFPEGFYNEINAIAQVLSYDGHNEPDILAMVAASAALTISGVPFMGPIGAARVGYLNGEYILNPTDEQVAEGDLDLVVAATHDAVMMVESEANELSEEVMLGAVLFAHDACKEVVKAIIKLAEQAAKEPWEIASSDDDAALKDKLRKLIGKDIAAAYKLTDKSARSNALNEARAKAKESFIADGLDPQAVMAGIKIVKKLEAEIVRTAILKEGKRIDGRTTTQIRPIVAETHFLPRAHGSALFTRGETQTIATCTLGTKDAEQMIDGLNGLSYQHFMLHYNFPPYSVGEVGRFGAPGRREVGHGKLAWRALHPVLPSKDEFPYTIRLTSDITESNGSSSMASVCGGSLAMMDAGVPIKRPVSGIAMGLILEGKDYAILSDILGDEDHLGDMDFKVAGTSEGITTMQMDIKIAGITREIFEAALAQAKEGRAHILGEMNKALGEVRTELSAHAPRIETMQIDKAKIRDVIGTGGKVIREIVATTGAKVDIDDEGLIKISSSDLDQIEAARKWIAGIVEEAEVGKIYDGKVVNLVDFGAFVNFMGGKDGLVHVSEIRNERVEKVADVLSEGQDVKVKVLEIDPRGKVRLSMRVVDQETGAELEDTRPAREPRERGDRGDRGDRGPRRDGGDRNRGGRERGPRRDGGGDRGPRRERSEDGPEDQGHVPDFLKD.

Asp-487 and Asp-493 together coordinate Mg(2+). In terms of domain architecture, KH spans 554-613 (PRIETMQIDKAKIRDVIGTGGKVIREIVATTGAKVDIDDEGLIKISSSDLDQIEAARKWI). The region spanning 623 to 691 (GKIYDGKVVN…PRGKVRLSMR (69 aa)) is the S1 motif domain. The disordered stretch occupies residues 696–771 (ETGAELEDTR…QGHVPDFLKD (76 aa)). Over residues 702–771 (EDTRPAREPR…QGHVPDFLKD (70 aa)) the composition is skewed to basic and acidic residues.

It belongs to the polyribonucleotide nucleotidyltransferase family. Mg(2+) serves as cofactor.

It is found in the cytoplasm. It catalyses the reaction RNA(n+1) + phosphate = RNA(n) + a ribonucleoside 5'-diphosphate. Its function is as follows. Involved in mRNA degradation. Catalyzes the phosphorolysis of single-stranded polyribonucleotides processively in the 3'- to 5'-direction. The sequence is that of Polyribonucleotide nucleotidyltransferase from Sphingopyxis alaskensis (strain DSM 13593 / LMG 18877 / RB2256) (Sphingomonas alaskensis).